A 154-amino-acid chain; its full sequence is Large ribosomal subunit protein uL30 (154 aa).

The segment at 114–139 (PTLRLHPPRGGHDGIKHPTKEGGQLG) is disordered. Over residues 123-133 (GGHDGIKHPTK) the composition is skewed to basic and acidic residues.

This sequence belongs to the universal ribosomal protein uL30 family. Part of the 50S ribosomal subunit.

In Natronomonas pharaonis (strain ATCC 35678 / DSM 2160 / CIP 103997 / JCM 8858 / NBRC 14720 / NCIMB 2260 / Gabara) (Halobacterium pharaonis), this protein is Large ribosomal subunit protein uL30.